Reading from the N-terminus, the 713-residue chain is MNSFFNSVSDFIHSVTTPDRYASQQRSSKASQSAGANSQNRPLYNNDDNQSEMYQASSSYTGGYTNSPSASSSNLAGGAAADRANPYSSRNNSTTNFSASSTSVNKAPYAPGSRSSAIGNNDPAGVTRDSHELQEYVDGQPPAPSVAMSWERIDKWADEHYPELNDQLCYPATASDLNELEADLDCSLPLDVRDSCLIHDGQEKFGRPSGIIFGITLLDLETIAEEWYSWKKAAIRINREIARATGQTPTKQGGIFINPNAGSPNSSTPGSPVASVARQKNISSWLASQDSVPEGAVQLVYAHPGWIPLANDRAGNNIAVDLAPGKKGKWGQVILFGREFDRKYVVAQSWAHFLAMVADDFDRGNWEVDHDTEELWFKTDRGTFVSYFTVLKTRVERQFRHQMQRREHERRQAAAAAQQQQQQQQHHAQGGLHSPSPQHTQSMPAPGLGKPLTSKPAQDLDIVDLNEDTATIKDKGKATMGSALRKTIVDESKTAHTIVEPLEESEEIKGKGKGKEEDVNEAAEKAKVEATEKTKKAAKEAADKEAELKKAAEKAAEEKAKAEKKAAEAREKEEKEAKAAAKAKEEELKKEEVAKAAAKAEEEQKATAAAEAAKAEAKRAAEADASKKVEAEKAAAEESKESKAESEESKVERDLEELKIDEENGNAEEADEEADDDDEDDEEEGDSKEGEETKSTTASKSKSKKKNKKKGKK.

Disordered regions lie at residues 18–129, 255–274, 400–457, and 500–713; these read PDRY…VTRD, IFINPNAGSPNSSTPGSPVA, RHQM…SKPA, and EPLE…KGKK. Positions 22 to 34 are enriched in low complexity; that stretch reads ASQQRSSKASQSA. The segment covering 35 to 65 has biased composition (polar residues); the sequence is GANSQNRPLYNNDDNQSEMYQASSSYTGGYT. Composition is skewed to low complexity over residues 66-81 and 88-103; these read NSPSASSSNLAGGAAA and SSRNNSTTNFSASSTS. Residues 260–270 are compositionally biased toward polar residues; that stretch reads NAGSPNSSTPG. Residues 400–412 are compositionally biased toward basic and acidic residues; that stretch reads RHQMQRREHERRQ. A compositionally biased stretch (low complexity) spans 413–429; the sequence is AAAAAQQQQQQQQHHAQ. Basic and acidic residues-rich tracts occupy residues 507–605 and 613–662; these read EIKG…EEQK and AKAE…KIDE. Residues 663 to 686 are compositionally biased toward acidic residues; it reads ENGNAEEADEEADDDDEDDEEEGD. Residues 701-713 are compositionally biased toward basic residues; it reads SKSKKKNKKKGKK.

This sequence belongs to the KNR4/SMI1 family.

The sequence is that of KNR4/SMI1 homolog from Yarrowia lipolytica (strain CLIB 122 / E 150) (Yeast).